Reading from the N-terminus, the 498-residue chain is Probable cytosol aminopeptidase (498 aa).

Mn(2+) contacts are provided by Lys-264 and Asp-269. The active site involves Lys-276. Mn(2+)-binding residues include Asp-287, Asp-346, and Glu-348. The active site involves Arg-350.

This sequence belongs to the peptidase M17 family. Mn(2+) is required as a cofactor.

The protein localises to the cytoplasm. The catalysed reaction is Release of an N-terminal amino acid, Xaa-|-Yaa-, in which Xaa is preferably Leu, but may be other amino acids including Pro although not Arg or Lys, and Yaa may be Pro. Amino acid amides and methyl esters are also readily hydrolyzed, but rates on arylamides are exceedingly low.. It carries out the reaction Release of an N-terminal amino acid, preferentially leucine, but not glutamic or aspartic acids.. Its function is as follows. Presumably involved in the processing and regular turnover of intracellular proteins. Catalyzes the removal of unsubstituted N-terminal amino acids from various peptides. The polypeptide is Probable cytosol aminopeptidase (Xanthobacter autotrophicus (strain ATCC BAA-1158 / Py2)).